Here is a 106-residue protein sequence, read N- to C-terminus: Adipokinetic hormone/corazonin-related peptide (106 aa).

Residues 1–25 form the signal peptide; sequence MRNSIYKLIMFAVLCMVLTSSLSYA. Gln-26 bears the Pyrrolidone carboxylic acid mark. Ala-35 is subject to Alanine amide. A propeptide spanning residues 39 to 106 is cleaved from the precursor; it reads SLAEAAQSTG…GLPLFSNGHL (68 aa).

Belongs to the AKH/HRTH/RPCH family. In terms of tissue distribution, only expressed in the head and thorax body segments of adults. Is more expressed in adult males than in females.

Its subcellular location is the secreted. Functionally, neuropeptide with neuromodulator or neurotransmitter role that activates the adipokinetic hormone/corazonin-related peptide receptor (ACPR). May function in regulation of post-ecdysis activities. Does not activate the A.gambiae adipokinetic hormone (AKH) and corazonin (CRZ) receptors. The protein is Adipokinetic hormone/corazonin-related peptide of Aedes aegypti (Yellowfever mosquito).